Here is a 199-residue protein sequence, read N- to C-terminus: mRNA export protein mlo3 (199 aa).

The interval Met1–Val41 is disordered. A compositionally biased stretch (basic residues) spans Gly19 to Lys35. The region spanning Ser55–Asp134 is the RRM domain. Residues Ala144–Glu199 form a disordered region. The segment covering Pro148–Ala161 has biased composition (polar residues). Residues Ser163–Lys179 are compositionally biased toward basic residues.

In terms of assembly, interacts with rpn15/dss1, mex67 and uap56.

It is found in the nucleus. In terms of biological role, has a role in the mRNA export process. Interferes with mitotic chromosome segregation when overexpressed. In Schizosaccharomyces pombe (strain 972 / ATCC 24843) (Fission yeast), this protein is mRNA export protein mlo3 (mlo3).